Consider the following 519-residue polypeptide: ATP synthase subunit alpha (519 aa).

Position 175 to 182 (175 to 182 (GDRQTGKT)) interacts with ATP.

Belongs to the ATPase alpha/beta chains family. F-type ATPases have 2 components, CF(1) - the catalytic core - and CF(0) - the membrane proton channel. CF(1) has five subunits: alpha(3), beta(3), gamma(1), delta(1), epsilon(1). CF(0) has three main subunits: a(1), b(2) and c(9-12). The alpha and beta chains form an alternating ring which encloses part of the gamma chain. CF(1) is attached to CF(0) by a central stalk formed by the gamma and epsilon chains, while a peripheral stalk is formed by the delta and b chains.

The protein localises to the cell inner membrane. The enzyme catalyses ATP + H2O + 4 H(+)(in) = ADP + phosphate + 5 H(+)(out). In terms of biological role, produces ATP from ADP in the presence of a proton gradient across the membrane. The alpha chain is a regulatory subunit. The sequence is that of ATP synthase subunit alpha from Acinetobacter baylyi (strain ATCC 33305 / BD413 / ADP1).